The chain runs to 761 residues: Ribonucleoside-diphosphate reductase 1 subunit alpha (761 aa).

One can recognise an ATP-cone domain in the interval 5 to 95 (LLVTKRDGRT…IFHLRKKAFG (91 aa)). Residues K9, 15–21 (ERINLDK), T55, and K91 contribute to the ATP site. T209 serves as a coordination point for GDP. An intrachain disulfide couples C225 to C462. DTTP-binding positions include 232-234 (DSL), R262, and R269. Position 437 (N437) interacts with GDP. The active-site Proton acceptor is the N437. The active-site Cysteine radical intermediate is C439. GDP contacts are provided by residues E441 and 623–625 (ETS). E441 serves as the catalytic Proton acceptor.

It belongs to the ribonucleoside diphosphate reductase large chain family. Tetramer of two alpha (R1) and two beta (R2) subunits. The B1 protein is a dimer of alpha subunits. A radical transfer pathway occurs between 'Tyr-122' of R2 and R1.

The enzyme catalyses a 2'-deoxyribonucleoside 5'-diphosphate + [thioredoxin]-disulfide + H2O = a ribonucleoside 5'-diphosphate + [thioredoxin]-dithiol. Under complex allosteric control mediated by deoxynucleoside triphosphates and ATP binding to separate specificity and activation sites on the alpha subunit. The type of nucleotide bound at the specificity site determines substrate preference. It seems probable that ATP makes the enzyme reduce CDP and UDP, dGTP favors ADP reduction and dTTP favors GDP reduction. Stimulated by ATP and inhibited by dATP binding to the activity site. In terms of biological role, provides the precursors necessary for DNA synthesis. Catalyzes the biosynthesis of deoxyribonucleotides from the corresponding ribonucleotides. R1 contains the binding sites for both substrates and allosteric effectors and carries out the actual reduction of the ribonucleotide. This Salmonella typhimurium (strain LT2 / SGSC1412 / ATCC 700720) protein is Ribonucleoside-diphosphate reductase 1 subunit alpha (nrdA).